We begin with the raw amino-acid sequence, 60 residues long: Ras-related protein Rab-2A (60 aa).

Positions 1, 2, and 19 each coordinate GTP. S1 serves as a coordination point for Mg(2+). Residues 16-24 (HDLTIGVEF) carry the Effector region motif. T19 lines the Mg(2+) pocket.

This sequence belongs to the small GTPase superfamily. Rab family. Interacts with PRKCI. Interacts with TRIP11. Interacts (in GTP-bound form) with GARIN1B. Interacts (GTP-bound) with HOPS complex component VPS39; interaction contributes to obtaining a functional HOPS complex that promotes autophagosome-lysosome membrane fusion driven by STX17-SNAP29-VAMP8. May interact with VPS41. Requires Mg(2+) as cofactor. Prenylated. Prenylation is required for association with cellular membranes.

It localises to the endoplasmic reticulum-Golgi intermediate compartment membrane. The protein resides in the melanosome. Its subcellular location is the endoplasmic reticulum membrane. It is found in the golgi apparatus membrane. The protein localises to the cytoplasmic vesicle. It localises to the secretory vesicle. The protein resides in the acrosome. Its subcellular location is the autophagosome membrane. It catalyses the reaction GTP + H2O = GDP + phosphate + H(+). Regulated by guanine nucleotide exchange factors (GEFs) which promote the exchange of bound GDP for free GTP, GTPase activating proteins (GAPs) which increase the GTP hydrolysis activity, and GDP dissociation inhibitors (GDIs) which inhibit the dissociation of the nucleotide from the GTPase. Functionally, the small GTPases Rab are key regulators of intracellular membrane trafficking, from the formation of transport vesicles to their fusion with membranes. Rabs cycle between active GTP-bound and inactive GDP-bound states. In their active state, drive transport of vesicular carriers from donor organelles to acceptor organelles to regulate the membrane traffic that maintains organelle identity and morphology. RAB2A regulates autophagy by promoting autophagosome-lysosome fusion via recruitment of the HOPS endosomal tethering complex; this process involves autophagosomal RAB2A and lysosomal RAB39A recruitment of HOPS subcomplexes VPS39-VPS11 and VPS41-VPS16-VPS18-VPS33A, respectively, which assemble into a functional complex to mediate membrane tethering and SNAREs-driven membrane fusion. Required for protein transport from the endoplasmic reticulum to the Golgi complex. Regulates the compacted morphology of the Golgi. Together with RAB2B, redundantly required for efficient autophagic flux. The chain is Ras-related protein Rab-2A from Mesocricetus auratus (Golden hamster).